The chain runs to 105 residues: Large ribosomal subunit protein bL21 (105 aa).

This sequence belongs to the bacterial ribosomal protein bL21 family. Part of the 50S ribosomal subunit. Contacts protein L20.

In terms of biological role, this protein binds to 23S rRNA in the presence of protein L20. This chain is Large ribosomal subunit protein bL21, found in Rhizobium rhizogenes (strain K84 / ATCC BAA-868) (Agrobacterium radiobacter).